The sequence spans 157 residues: 3-hydroxyacyl-[acyl-carrier-protein] dehydratase FabZ (157 aa).

The active site involves His58.

The protein belongs to the thioester dehydratase family. FabZ subfamily.

The protein localises to the cytoplasm. The enzyme catalyses a (3R)-hydroxyacyl-[ACP] = a (2E)-enoyl-[ACP] + H2O. Functionally, involved in unsaturated fatty acids biosynthesis. Catalyzes the dehydration of short chain beta-hydroxyacyl-ACPs and long chain saturated and unsaturated beta-hydroxyacyl-ACPs. This is 3-hydroxyacyl-[acyl-carrier-protein] dehydratase FabZ from Brucella ovis (strain ATCC 25840 / 63/290 / NCTC 10512).